The sequence spans 319 residues: D-alanine--D-alanine ligase B (319 aa).

The ATP-grasp domain occupies Lys-117–Ala-312. Residue Ala-143–Thr-198 participates in ATP binding. The Mg(2+) site is built by Asp-266, Glu-279, and Asn-281.

Belongs to the D-alanine--D-alanine ligase family. Mg(2+) is required as a cofactor. Requires Mn(2+) as cofactor.

Its subcellular location is the cytoplasm. It catalyses the reaction 2 D-alanine + ATP = D-alanyl-D-alanine + ADP + phosphate + H(+). It functions in the pathway cell wall biogenesis; peptidoglycan biosynthesis. Its function is as follows. Cell wall formation. The polypeptide is D-alanine--D-alanine ligase B (Pseudomonas syringae pv. tomato (strain ATCC BAA-871 / DC3000)).